The primary structure comprises 81 residues: Small ribosomal subunit protein bS16 (81 aa).

This sequence belongs to the bacterial ribosomal protein bS16 family.

The protein is Small ribosomal subunit protein bS16 of Neisseria meningitidis serogroup C (strain 053442).